A 383-amino-acid polypeptide reads, in one-letter code: NIPA-like protein 2 (383 aa).

Asn23 and Asn33 each carry an N-linked (GlcNAc...) asparagine glycan. A run of 7 helical transmembrane segments spans residues 46-66, 88-108, 110-130, 144-164, 177-197, 209-229, and 243-263; these read IHLF…ISLN, VLWW…FAAY, FAPI…SAII, LLGT…APNI, LVGW…CILL, VILL…VKAV, and LTYP…VFQV. Asn274 carries an N-linked (GlcNAc...) asparagine glycan. 2 helical membrane passes run 278–298 and 306–326; these read VVPV…IIFY and FLTV…VFLV. A disordered region spans residues 355 to 383; sequence QPDSHSLSYGTLPDGSDSTKSQSGEKKEV.

This sequence belongs to the NIPA family.

It is found in the membrane. In Homo sapiens (Human), this protein is NIPA-like protein 2 (NIPAL2).